We begin with the raw amino-acid sequence, 444 residues long: Acyl-CoA 6-desaturase (444 aa).

Topologically, residues 1–122 are cytoplasmic; it reads MGKGGNQDEG…FRALRKTAED (122 aa). A Cytochrome b5 heme-binding domain is found at 18-95; the sequence is MPTFRWEEIQ…MKPLLIGELA (78 aa). The helical transmembrane segment at 123–143 threads the bilayer; sequence MNLFKSNQLFFLLHLAHIIAM. Over 144–147 the chain is Lumenal; it reads ESIA. A helical transmembrane segment spans residues 148 to 168; that stretch reads WFTLFYFGNGWIPTIITAFVL. Topologically, residues 169 to 264 are cytoplasmic; it reads ATSQAQAGWL…KYLPYNHQHE (96 aa). Residues 180–184 carry the Histidine box-1 motif; sequence HDYGH. A Histidine box-2 motif is present at residues 217–221; the sequence is HFQHH. The chain crosses the membrane as a helical span at residues 265-285; it reads YFFLIGPPLLIPLYFQYQIIM. The Lumenal segment spans residues 286–305; it reads TMIVRKYWADLAWAISYYTR. A helical membrane pass occupies residues 306-326; the sequence is FFITYIPFYGVLGSILFLNFI. Topologically, residues 327–444 are cytoplasmic; that stretch reads RFLESHWFVW…QLWLDAYLHK (118 aa). The Histidine box-3 motif lies at 382 to 386; sequence QIEHH.

This sequence belongs to the fatty acid desaturase type 1 family.

It localises to the endoplasmic reticulum membrane. The enzyme catalyses (9Z,12Z)-octadecadienoyl-CoA + 2 Fe(II)-[cytochrome b5] + O2 + 2 H(+) = (6Z,9Z,12Z)-octadecatrienoyl-CoA + 2 Fe(III)-[cytochrome b5] + 2 H2O. The catalysed reaction is (9Z,12Z,15Z)-octadecatrienoyl-CoA + 2 Fe(II)-[cytochrome b5] + O2 + 2 H(+) = (6Z,9Z,12Z,15Z)-octadecatetraenoyl-CoA + 2 Fe(III)-[cytochrome b5] + 2 H2O. It carries out the reaction (9Z,12Z,15Z,18Z,21Z)-tetracosapentaenoyl-CoA + 2 Fe(II)-[cytochrome b5] + O2 + 2 H(+) = (6Z,9Z,12Z,15Z,18Z,21Z)-tetracosahexaenoyl-CoA + 2 Fe(III)-[cytochrome b5] + 2 H2O. It catalyses the reaction (11E)-octadecenoyl-CoA + 2 Fe(II)-[cytochrome b5] + O2 + 2 H(+) = (6Z,11E)-octadecadienoyl-CoA + 2 Fe(III)-[cytochrome b5] + 2 H2O. The enzyme catalyses (11Z,14Z)-eicosadienoyl-CoA + 2 Fe(II)-[cytochrome b5] + O2 + 2 H(+) = (8Z,11Z,14Z)-eicosatrienoyl-CoA + 2 Fe(III)-[cytochrome b5] + 2 H2O. The catalysed reaction is (11Z,14Z,17Z)-eicosatrienoyl-CoA + 2 Fe(II)-[cytochrome b5] + O2 + 2 H(+) = (8Z,11Z,14Z,17Z)-eicosatetraenoyl-CoA + 2 Fe(III)-[cytochrome b5] + 2 H2O. Its pathway is lipid metabolism; polyunsaturated fatty acid biosynthesis. Functionally, involved in the biosynthesis of highly unsaturated fatty acids (HUFA) from the essential polyunsaturated fatty acids (PUFA) linoleic acid (LA) (18:2n-6) and alpha-linolenic acid (ALA) (18:3n-3) precursors, acting as a fatty acyl-coenzyme A (CoA) desaturase that introduces a cis double bond at carbon 6 of the fatty acyl chain. Catalyzes the first and rate limiting step in this pathway which is the desaturation of LA (18:2n-6) and ALA (18:3n-3) into gamma-linoleate (GLA) (18:3n-6) and stearidonate (18:4n-3), respectively. Subsequently, in the biosynthetic pathway of HUFA n-3 series, it desaturates tetracosapentaenoate (24:5n-3) to tetracosahexaenoate (24:6n-3), which is then converted to docosahexaenoate (DHA)(22:6n-3), an important lipid for nervous system function. It can also desaturate (11E)-octadecenoate (trans-vaccenoate, a metabolite in the biohydrogenation pathway of LA and the predominant trans fatty acid in cow milk) at carbon 6 generating (6Z,11E)-octadecadienoate. In addition to Delta-6 activity, this enzyme exhibits Delta-8 activity with slight biases toward n-3 fatty acyl-CoA substrates. The sequence is that of Acyl-CoA 6-desaturase (FADS2) from Bos taurus (Bovine).